We begin with the raw amino-acid sequence, 166 residues long: ATP synthase subunit b (166 aa).

The helical transmembrane segment at 10–30 threads the bilayer; it reads LLFWMVIVFGIVFVILAKYGF.

The protein belongs to the ATPase B chain family. As to quaternary structure, F-type ATPases have 2 components, F(1) - the catalytic core - and F(0) - the membrane proton channel. F(1) has five subunits: alpha(3), beta(3), gamma(1), delta(1), epsilon(1). F(0) has three main subunits: a(1), b(2) and c(10-14). The alpha and beta chains form an alternating ring which encloses part of the gamma chain. F(1) is attached to F(0) by a central stalk formed by the gamma and epsilon chains, while a peripheral stalk is formed by the delta and b chains.

It localises to the cell inner membrane. Its function is as follows. F(1)F(0) ATP synthase produces ATP from ADP in the presence of a proton or sodium gradient. F-type ATPases consist of two structural domains, F(1) containing the extramembraneous catalytic core and F(0) containing the membrane proton channel, linked together by a central stalk and a peripheral stalk. During catalysis, ATP synthesis in the catalytic domain of F(1) is coupled via a rotary mechanism of the central stalk subunits to proton translocation. Component of the F(0) channel, it forms part of the peripheral stalk, linking F(1) to F(0). This Phocaeicola vulgatus (strain ATCC 8482 / DSM 1447 / JCM 5826 / CCUG 4940 / NBRC 14291 / NCTC 11154) (Bacteroides vulgatus) protein is ATP synthase subunit b.